A 232-amino-acid chain; its full sequence is Ornithine carbamoyltransferase (232 aa).

Residues Gln-15, Arg-39, and His-66 to Gln-69 each bind carbamoyl phosphate. L-ornithine contacts are provided by residues Asn-99, Asp-163, and Ser-167 to Met-168. Carbamoyl phosphate contacts are provided by residues His-204–Pro-207 and Thr-232.

Belongs to the aspartate/ornithine carbamoyltransferase superfamily. OTCase family.

The protein localises to the cytoplasm. It carries out the reaction carbamoyl phosphate + L-ornithine = L-citrulline + phosphate + H(+). The protein operates within amino-acid biosynthesis; L-arginine biosynthesis; L-arginine from L-ornithine and carbamoyl phosphate: step 1/3. Its function is as follows. Reversibly catalyzes the transfer of the carbamoyl group from carbamoyl phosphate (CP) to the N(epsilon) atom of ornithine (ORN) to produce L-citrulline. This chain is Ornithine carbamoyltransferase (argF), found in Neisseria sicca.